We begin with the raw amino-acid sequence, 1347 residues long: Protocadherin-11 X-linked (1347 aa).

A signal peptide spans 1-23; that stretch reads MDLLSGTYIFAVLLACVVFHSGA. Residues 24–812 lie on the Extracellular side of the membrane; it reads QEKNYTIREE…VSSPTSDYVK (789 aa). Cadherin domains follow at residues 26–139, 140–249, 250–355, 362–466, 467–570, 571–673, and 677–795; these read KNYT…APLF, PATV…HPVF, KETE…VPSI, NPVN…APVF, TQSF…SPVF, THNE…KPVF, and PSNY…APVT. Asn27, Asn48, and Asn54 each carry an N-linked (GlcNAc...) asparagine glycan. N-linked (GlcNAc...) asparagine glycosylation is present at Asn344. Asn553 carries N-linked (GlcNAc...) asparagine glycosylation. An N-linked (GlcNAc...) asparagine glycan is attached at Asn773. The chain crosses the membrane as a helical span at residues 813-833; the sequence is ILVAAVAGTITVVVVIFITAV. Topologically, residues 834 to 1347 are cytoplasmic; it reads VRCRQAPHLK…DSPVMEEHPL (514 aa). Disordered stretches follow at residues 1057–1091, 1097–1116, and 1325–1347; these read LPEG…GYPQ, RATP…ESTF, and TFTP…EHPL.

The protein resides in the cell membrane. Potential calcium-dependent cell-adhesion protein. This is Protocadherin-11 X-linked (PCDH11X) from Pan troglodytes (Chimpanzee).